We begin with the raw amino-acid sequence, 241 residues long: MLSFNPRLQPATLIKRYKRFLADIVTPAGEVLTIHCANTGAMTGCATPGDAVWYSTSDNPKRKYPHSWELTQTQIGDWICVNTLRANELASLAIDNNQIVELSGYTSVKREIKYGDENSRIDLLLQAENRSNCYIEVKSVTLLQQQCGYFPDAVTLRGQKHLRELQSMVANGHRAVLFFAVLHTGIRQVAAARHIDNRYAELLAQAQQAGVEVICYGFQLSPDGIALDARLPLLLDETPNS.

Belongs to the SfsA family.

This Yersinia enterocolitica serotype O:8 / biotype 1B (strain NCTC 13174 / 8081) protein is Sugar fermentation stimulation protein homolog.